The primary structure comprises 545 residues: MLPINNNFSLPQNSFYNTISGTYADYFSAWDKWEKQALPGEERDEAVSRLKECLINNSDELRLDRLNLSSLPDNLPAQITLLNVSYNQLTNLPELPVTLKKLYSASNKLSELPVLPPALESLQVQHNELENLPALPDSLLTMNISYNEIVSLPSLPQALKNLRATRNFLTELPAFSEGNNPVVREYFFDRNQISHIPESILNLRNECSIHISDNPLSSHALQALQRLTSSPDYHGPRIYFSMSDGQQNTLHRPLADAVTAWFPENKQSDVSQIWHAFEHEEHANTFSAFLDRLSDTVSARNTSGFREQVAAWLEKLSASAELRQQSFAVAADATESCEDRVALTWNNLRKTLLVHQASEGLFDNDTGALLSLGREMFRLEILEDIARDKVRTLHFVDEIEVYLAFQTMLAEKLQLSTAVKEMRFYGVSGVTANDLRTAEAMVRSREENEFTDWFSLWGPWHAVLKRTEADRWAQAEEQKYEMLENEYSQRVADRLKASGLSGDADAEREAGAQVMRETEQQIYRQLTDEVLALRLSENGSQLHHS.

Residues 1-242 (MLPINNNFSL…YHGPRIYFSM (242 aa)) form an interaction with target proteins region. LRR repeat units lie at residues 57–77 (NSDELRLDRLNLSSLPDNLPA), 78–99 (QITLLNVSYNQLTNLPELPVTL), 100–117 (KKLYSASNKLSELPVLPP), 118–139 (ALESLQVQHNELENLPALPDSL), 140–157 (LTMNISYNEIVSLPSLPQ), 158–179 (ALKNLRATRNFLTELPAFSEGN), 182–203 (VVREYFFDRNQISHIPESILNL), and 205–228 (NECSIHISDNPLSSHALQALQRLT). The tract at residues 243–250 (SDGQQNTL) is linker. The tract at residues 251–545 (HRPLADAVTA…SENGSQLHHS (295 aa)) is E3 ubiquitin-protein ligase catalytic domain. The NEL domain maps to 253–545 (PLADAVTAWF…SENGSQLHHS (293 aa)). C337 serves as the catalytic Glycyl thioester intermediate.

This sequence belongs to the LRR-containing bacterial E3 ligase family. Also interacts with human and mouse U2AF1 (U2AF35). Ubiquitinated in the presence of host E1 ubiquitin-activating enzyme, E2 ubiquitin-conjugating enzyme and ubiquitin.

It localises to the secreted. The protein resides in the host cytoplasm. The protein localises to the host nucleus. It catalyses the reaction S-ubiquitinyl-[E2 ubiquitin-conjugating enzyme]-L-cysteine + [acceptor protein]-L-lysine = [E2 ubiquitin-conjugating enzyme]-L-cysteine + N(6)-ubiquitinyl-[acceptor protein]-L-lysine.. Exists in an autoinhibited state in the absence of substrate protein, due to interactions of the leucine-rich repeats with NEL domain. Is activated upon binding to a substrate protein. In terms of biological role, effector E3 ubiquitin ligase that interferes with host's ubiquitination pathway and modulates the acute inflammatory responses, thus facilitating bacterial colonization within the host cell. Interacts with IKBKG (NEMO) and TNIP1 (ABIN-1), a ubiquitin-binding adapter protein, which results in TNIP1-dependent 'Lys-27'-linked polyubiquitination of IKBKG. Consequently, polyubiquitinated IKBKG undergoes proteasome-dependent degradation, which perturbs NF-kappa-B activation during bacterial infection. Mediates polyubiquitination of host U2AF1, leading to its proteasomal degradation. Catalyzes 'Lys-48'-linked polyubiquitination and subsequent degradation of a subset of host guanylate-binding proteins (GBP1, GBP2, GBP4 and GBP6), thereby suppressing host cell defense. In contrast, host GBP3 and GBP7 are not ubiquitinated by IpaH9.8. Uses UBE2D2 (UBCH5B) as an E2 ubiquitin-conjugating enzyme. This Shigella sonnei (strain Ss046) protein is E3 ubiquitin-protein ligase ipaH9.8 (ipaH9.8).